The sequence spans 20 residues: Ferric reductase A (20 aa).

Monomer.

The catalysed reaction is 2 a Fe(II)-siderophore + NAD(+) + H(+) = 2 a Fe(III)-siderophore + NADH. In terms of biological role, reductase activity that acts on Fe(3+)-chelates and NADH as an electron donor and requires the presence of FMN for full activity. May play a role in iron uptake. The chain is Ferric reductase A (ferA) from Paracoccus denitrificans.